We begin with the raw amino-acid sequence, 408 residues long: Imidazolonepropionase (408 aa).

2 residues coordinate Fe(3+): His-73 and His-75. Positions 73 and 75 each coordinate Zn(2+). Arg-82, Tyr-145, and His-178 together coordinate 4-imidazolone-5-propanoate. Tyr-145 lines the N-formimidoyl-L-glutamate pocket. His-243 contacts Fe(3+). Residue His-243 coordinates Zn(2+). Residue Gln-246 participates in 4-imidazolone-5-propanoate binding. Residue Asp-318 coordinates Fe(3+). Asp-318 lines the Zn(2+) pocket. The N-formimidoyl-L-glutamate site is built by Asn-320 and Gly-322. Ser-323 contacts 4-imidazolone-5-propanoate.

It belongs to the metallo-dependent hydrolases superfamily. HutI family. Requires Zn(2+) as cofactor. Fe(3+) is required as a cofactor.

It localises to the cytoplasm. It catalyses the reaction 4-imidazolone-5-propanoate + H2O = N-formimidoyl-L-glutamate. Its pathway is amino-acid degradation; L-histidine degradation into L-glutamate; N-formimidoyl-L-glutamate from L-histidine: step 3/3. In terms of biological role, catalyzes the hydrolytic cleavage of the carbon-nitrogen bond in imidazolone-5-propanoate to yield N-formimidoyl-L-glutamate. It is the third step in the universal histidine degradation pathway. This Shewanella loihica (strain ATCC BAA-1088 / PV-4) protein is Imidazolonepropionase.